Here is a 292-residue protein sequence, read N- to C-terminus: Ribosomal protein L11 methyltransferase (292 aa).

Residues Thr-143, Gly-164, Asp-186, and Asn-227 each contribute to the S-adenosyl-L-methionine site.

Belongs to the methyltransferase superfamily. PrmA family.

The protein resides in the cytoplasm. The enzyme catalyses L-lysyl-[protein] + 3 S-adenosyl-L-methionine = N(6),N(6),N(6)-trimethyl-L-lysyl-[protein] + 3 S-adenosyl-L-homocysteine + 3 H(+). Functionally, methylates ribosomal protein L11. The protein is Ribosomal protein L11 methyltransferase of Hahella chejuensis (strain KCTC 2396).